A 271-amino-acid chain; its full sequence is 3-methyl-2-oxobutanoate hydroxymethyltransferase (271 aa).

Mg(2+)-binding residues include Asp-53 and Asp-92. Residues 53 to 54, Asp-92, and Lys-120 each bind 3-methyl-2-oxobutanoate; that span reads DS. Glu-122 contacts Mg(2+). The active-site Proton acceptor is the Glu-189.

The protein belongs to the PanB family. In terms of assembly, homodecamer; pentamer of dimers. Mg(2+) is required as a cofactor.

It is found in the cytoplasm. The enzyme catalyses 3-methyl-2-oxobutanoate + (6R)-5,10-methylene-5,6,7,8-tetrahydrofolate + H2O = 2-dehydropantoate + (6S)-5,6,7,8-tetrahydrofolate. Its pathway is cofactor biosynthesis; (R)-pantothenate biosynthesis; (R)-pantoate from 3-methyl-2-oxobutanoate: step 1/2. Catalyzes the reversible reaction in which hydroxymethyl group from 5,10-methylenetetrahydrofolate is transferred onto alpha-ketoisovalerate to form ketopantoate. In Paraburkholderia xenovorans (strain LB400), this protein is 3-methyl-2-oxobutanoate hydroxymethyltransferase.